Reading from the N-terminus, the 415-residue chain is Branched-chain-amino-acid aminotransferase, cytosolic (415 aa).

Lys244 is subject to N6-(pyridoxal phosphate)lysine.

The protein belongs to the class-IV pyridoxal-phosphate-dependent aminotransferase family. Requires pyridoxal 5'-phosphate as cofactor.

It localises to the cytoplasm. The enzyme catalyses L-leucine + 2-oxoglutarate = 4-methyl-2-oxopentanoate + L-glutamate. It catalyses the reaction L-isoleucine + 2-oxoglutarate = (S)-3-methyl-2-oxopentanoate + L-glutamate. The catalysed reaction is L-valine + 2-oxoglutarate = 3-methyl-2-oxobutanoate + L-glutamate. Functionally, catalyzes the first reaction in the catabolism of the essential branched chain amino acids leucine, isoleucine, and valine. The chain is Branched-chain-amino-acid aminotransferase, cytosolic (bcat-1) from Caenorhabditis elegans.